The sequence spans 776 residues: MAGKAVLKGKGGGPPRRASKVAPKKTRQLRVQMPNGLVLMRMLGVLWHALTGTARSPVLKAFWKVVPLKQATLALRKIKRTVSTLMVGLHRRGSRRTTIDWMTPLLITVMLGMCLTATVRRERDGSMVIRAEGRDAATQVRVENGTCVILATDMGSWCDDSLAYECVTIDQGEEPVDVDCFCRGVEKVTLEYGRCGRREGSRSRRSVLIPSHAQRDLTGRGHQWLEGEAVKAHLTRVEGWVWKNKLFTLSLVMVAWLMVDGLLPRILIVVVALALVPAYASRCTHLENRDFVTGVQGTTRLTLVLELGGCVTVTADGKPSLDVWLDSIYQESPAQTREYCLHAKLTGTKVAARCPTMGPATLPEEHQSGTVCKRDQSDRGWGNHCGLFGKGSIVTCVKFTCEDKKKATGHVYDVNKITYTIKVEPHTGEFVAANETHSGRKSASFTVSSEKTILTLGDYGDVSLLCRVASGVDLAQTVVLALDKTHEHLPTAWQVHRDWFNDLALPWKHDGAEAWNEAGRLVEFGTPHAVKMDVFNLGDQTGVLLKSLAGVPVASIEGTKYHLKSGHVTCEVGLEKLKMKGLTYTVCDKTKFTWKRAPTDSGHDTVVMEVGFSGTRPCRIPVRAVAHGVPEVNVAMLITPNPTMENNGGGFIEMQLPPGDNIIYVGDLNHQWFQKGSSIGRVLQKTRKGIERLTVLGEHAWDFGSVGGVMTSIGRAMHTVLGGAFNTLLGGVGFLPKILLGVAMAWLGLNMRNPTLSMGFLLSGGLVLAMTLGVGA.

Residues Met1 to Arg27 form a disordered region. The Cytoplasmic portion of the chain corresponds to Met1–Thr98. Basic residues predominate over residues Arg17–Arg27. A hydrophobic; homodimerization of capsid protein C region spans residues Met33 to Leu68. Positions Thr97–Ala117 are cleaved as a propeptide — ER anchor for the protein C, removed in mature form by serine protease NS3. The chain crosses the membrane as a helical span at residues Ile99–Ala117. Residues Thr118–Trp242 lie on the Extracellular side of the membrane. Asn144 carries an N-linked (GlcNAc...) asparagine; by host glycan. Residues Lys243–Asp260 traverse the membrane as a helical segment. Residue Gly261 is a topological domain, cytoplasmic. Residues Leu262–Ala280 form a helical membrane-spanning segment. Residues Ser281–Thr727 lie on the Extracellular side of the membrane. 4 cysteine pairs are disulfide-bonded: Cys283-Cys310, Cys340-Cys396, Cys354-Cys385, and Cys372-Cys401. An N-linked (GlcNAc...) asparagine; by host glycan is attached at Asn434. Intrachain disulfides connect Cys466/Cys570 and Cys587/Cys618. An intramembrane region (helical) is located at residues Leu728–Gly748. The Extracellular portion of the chain corresponds to Leu749–Thr755. An intramembrane region (helical) is located at residues Leu756–Ala776.

Post-translationally, specific enzymatic cleavages in vivo yield mature proteins Peptide 2K acts as a signal sequence and is removed from the N-terminus of NS4B by the host signal peptidase in the ER lumen. Signal cleavage at the 2K-4B site requires a prior NS3 protease-mediated cleavage at the 4A-2K site.

It localises to the virion. It is found in the secreted. The protein resides in the virion membrane. The protein localises to the host endoplasmic reticulum membrane. Its function is as follows. Capsid protein C self-assembles to form an icosahedral capsid about 30 nm in diameter. The capsid encapsulates the genomic RNA. PrM acts as a chaperone for envelope protein E during intracellular virion assembly by masking and inactivating envelope protein E fusion peptide. prM is matured in the last step of virion assembly, presumably to avoid catastrophic activation of the viral fusion peptide induced by the acidic pH of the trans-Golgi network. After cleavage by host furin, the pr peptide is released in the extracellular medium and small envelope protein M and envelope protein E homodimers are dissociated. Functionally, envelope protein E binding to host cell surface receptor is followed by virus internalization through clathrin-mediated endocytosis. Envelope protein E is subsequently involved in membrane fusion between virion and host late endosomes. Synthesized as a homodimer with prM which acts as a chaperone for envelope protein E. After cleavage of prM, envelope protein E dissociate from small envelope protein M and homodimerizes. This chain is Genome polyprotein, found in Homo sapiens (Human).